We begin with the raw amino-acid sequence, 493 residues long: Dynein regulatory complex subunit 2 (493 aa).

Coiled-coil stretches lie at residues 99 to 163 and 253 to 280; these read DSVI…RKLI and KDEK…ILKG.

The protein belongs to the DRC2 family. In terms of assembly, component of the nexin-dynein regulatory complex (N-DRC). Interacts with DRC1.

It localises to the cytoplasm. The protein resides in the cytoskeleton. Its subcellular location is the flagellum basal body. The protein localises to the cell projection. It is found in the cilium. It localises to the flagellum. The protein resides in the flagellum axoneme. In terms of biological role, component of the nexin-dynein regulatory complex (N-DRC), a key regulator of ciliary/flagellar motility which maintains the alignment and integrity of the distal axoneme and regulates microtubule sliding in motile axonemes. Plays a critical role in the assembly of N-DRC and also stabilizes the assembly of multiple inner dynein arms and radial spokes. Coassembles with DRC1 to form a central scaffold needed for assembly of the N-DRC and its attachment to the outer doublet microtubules. The protein is Dynein regulatory complex subunit 2 (Ccdc65) of Mus musculus (Mouse).